Here is a 422-residue protein sequence, read N- to C-terminus: tRNA hydroxylation protein P (422 aa).

The N-terminal stretch at 1–58 (MNQVELLSPAGNLKKLKIALNYGADAVYGGVSHFSLRNRAGKEFTLETFKEGIDYAHA) is a signal peptide.

Belongs to the peptidase U32 family.

In terms of biological role, involved in prephenate-dependent formation of 5-hydroxyuridine (ho5U) modification at position 34 in tRNAs, the first step in 5-carboxymethoxyuridine (cmo5U) biosynthesis. The protein is tRNA hydroxylation protein P of Helicobacter pylori (strain J99 / ATCC 700824) (Campylobacter pylori J99).